The sequence spans 197 residues: Imidazoleglycerol-phosphate dehydratase (197 aa).

This sequence belongs to the imidazoleglycerol-phosphate dehydratase family.

It localises to the cytoplasm. The enzyme catalyses D-erythro-1-(imidazol-4-yl)glycerol 3-phosphate = 3-(imidazol-4-yl)-2-oxopropyl phosphate + H2O. The protein operates within amino-acid biosynthesis; L-histidine biosynthesis; L-histidine from 5-phospho-alpha-D-ribose 1-diphosphate: step 6/9. This chain is Imidazoleglycerol-phosphate dehydratase, found in Streptomyces avermitilis (strain ATCC 31267 / DSM 46492 / JCM 5070 / NBRC 14893 / NCIMB 12804 / NRRL 8165 / MA-4680).